Reading from the N-terminus, the 364-residue chain is MPQTVILPGPAPWGFRLSGGIDFNQPLVITRITPGSKAAAANLCPGDVILAIDGFGTESMTHADAQDRIKAAAHQLCLKIDRGETHLWSPQVSEDGKAHPFKINLESEPQDGNYFEHKHNIRPKPFVIPGRSSGCSTPSGIDCGSGRSTPSSVSTVSTICPGDLKVAAKLAPNIPLEMELPGVKIVHAQFNTPMQLYSDDNIMETLQGQVSTALGETPLMSEPTASVPPESDVYRMLHDNRNEPTQPRQSGSFRVLQGMVDDGSDDRPAGTRSVRAPVTKVHGGSGGAQRMPLCDKCGSGIVGAVVKARDKYRHPECFVCADCNLNLKQKGYFFIEGELYCETHARARTKPPEGYDTVTLYPKA.

The PDZ domain occupies Met1 to Glu84. Phosphoserine is present on residues Ser18, Ser93, and Ser264. In terms of domain architecture, LIM zinc-binding spans Pro292–Pro351.

As to quaternary structure, interacts with ACTN2. Forms a heterodimer with PDLIM4 (via LIM domain). Isoform 1 is highly expressed in differentiated skeletal muscle. Isoform 2 is heart-specific.

The protein resides in the cytoplasm. Its subcellular location is the myofibril. It localises to the sarcomere. It is found in the z line. Its function is as follows. May play a role in the organization of actin filament arrays within muscle cells. The chain is PDZ and LIM domain protein 3 (PDLIM3) from Homo sapiens (Human).